We begin with the raw amino-acid sequence, 609 residues long: Glutamine--fructose-6-phosphate aminotransferase [isomerizing] (609 aa).

Residue C2 is the Nucleophile; for GATase activity of the active site. The 218-residue stretch at 2 to 219 (CGIVGYIGGR…DGECARLTRD (218 aa)) folds into the Glutamine amidotransferase type-2 domain. 2 consecutive SIS domains span residues 285–424 (SSDL…LRGT) and 458–599 (LARE…VDQP). K604 acts as the For Fru-6P isomerization activity in catalysis.

Homodimer.

The protein localises to the cytoplasm. It carries out the reaction D-fructose 6-phosphate + L-glutamine = D-glucosamine 6-phosphate + L-glutamate. Functionally, catalyzes the first step in hexosamine metabolism, converting fructose-6P into glucosamine-6P using glutamine as a nitrogen source. This chain is Glutamine--fructose-6-phosphate aminotransferase [isomerizing], found in Gloeobacter violaceus (strain ATCC 29082 / PCC 7421).